The chain runs to 314 residues: Protein phosphatase PTC7 homolog fig (314 aa).

A PPM-type phosphatase domain is found at 43–309; sequence PYLVTVVQGR…DDITLILSSV (267 aa). Mn(2+) contacts are provided by Asp-87, Gly-88, and Asp-232.

The protein belongs to the PP2C family. The cofactor is Mg(2+). Requires Mn(2+) as cofactor.

It carries out the reaction O-phospho-L-seryl-[protein] + H2O = L-seryl-[protein] + phosphate. The enzyme catalyses O-phospho-L-threonyl-[protein] + H2O = L-threonyl-[protein] + phosphate. The chain is Protein phosphatase PTC7 homolog fig from Drosophila sechellia (Fruit fly).